Consider the following 285-residue polypeptide: Acetylglutamate kinase (285 aa).

Substrate contacts are provided by residues 69–70 (GG), Arg-91, and Asn-183.

The protein belongs to the acetylglutamate kinase family. ArgB subfamily.

It localises to the cytoplasm. The enzyme catalyses N-acetyl-L-glutamate + ATP = N-acetyl-L-glutamyl 5-phosphate + ADP. Its pathway is amino-acid biosynthesis; L-arginine biosynthesis; N(2)-acetyl-L-ornithine from L-glutamate: step 2/4. Its function is as follows. Catalyzes the ATP-dependent phosphorylation of N-acetyl-L-glutamate. The chain is Acetylglutamate kinase from Jannaschia sp. (strain CCS1).